Here is a 243-residue protein sequence, read N- to C-terminus: Cysteine-rich secretory protein 2 (243 aa).

The first 21 residues, Met-1–Gly-21, serve as a signal peptide directing secretion. Positions Val-41 to Tyr-169 constitute an SCP domain. 5 cysteine pairs are disulfide-bonded: Cys-189/Cys-196, Cys-192/Cys-201, Cys-205/Cys-238, Cys-214/Cys-232, and Cys-223/Cys-236. A ShKT domain is found at Cys-205–Cys-238.

It belongs to the CRISP family. Interacts with NSUN4 isoform 3. As to expression, testis and epididymis.

The protein resides in the secreted. May regulate some ion channels' activity and thereby regulate calcium fluxes during sperm capacitation. This chain is Cysteine-rich secretory protein 2 (CRISP2), found in Homo sapiens (Human).